The sequence spans 146 residues: D-aminoacyl-tRNA deacylase (146 aa).

A Gly-cisPro motif, important for rejection of L-amino acids motif is present at residues 138–139 (GP).

This sequence belongs to the DTD family. In terms of assembly, homodimer.

It localises to the cytoplasm. The catalysed reaction is glycyl-tRNA(Ala) + H2O = tRNA(Ala) + glycine + H(+). The enzyme catalyses a D-aminoacyl-tRNA + H2O = a tRNA + a D-alpha-amino acid + H(+). In terms of biological role, an aminoacyl-tRNA editing enzyme that deacylates mischarged D-aminoacyl-tRNAs. Also deacylates mischarged glycyl-tRNA(Ala), protecting cells against glycine mischarging by AlaRS. Acts via tRNA-based rather than protein-based catalysis; rejects L-amino acids rather than detecting D-amino acids in the active site. By recycling D-aminoacyl-tRNA to D-amino acids and free tRNA molecules, this enzyme counteracts the toxicity associated with the formation of D-aminoacyl-tRNA entities in vivo and helps enforce protein L-homochirality. This Xanthomonas oryzae pv. oryzae (strain MAFF 311018) protein is D-aminoacyl-tRNA deacylase.